A 1400-amino-acid chain; its full sequence is DNA-directed RNA polymerase subunit beta' (1400 aa).

Residues Cys-71, Cys-73, Cys-86, and Cys-89 each coordinate Zn(2+). Mg(2+) is bound by residues Asp-462, Asp-464, and Asp-466. Zn(2+)-binding residues include Cys-820, Cys-893, Cys-900, and Cys-903.

It belongs to the RNA polymerase beta' chain family. The RNAP catalytic core consists of 2 alpha, 1 beta, 1 beta' and 1 omega subunit. When a sigma factor is associated with the core the holoenzyme is formed, which can initiate transcription. It depends on Mg(2+) as a cofactor. The cofactor is Zn(2+).

It carries out the reaction RNA(n) + a ribonucleoside 5'-triphosphate = RNA(n+1) + diphosphate. In terms of biological role, DNA-dependent RNA polymerase catalyzes the transcription of DNA into RNA using the four ribonucleoside triphosphates as substrates. The chain is DNA-directed RNA polymerase subunit beta' from Methylobacterium nodulans (strain LMG 21967 / CNCM I-2342 / ORS 2060).